A 549-amino-acid polypeptide reads, in one-letter code: Cation/acetate symporter ActP (549 aa).

Transmembrane regions (helical) follow at residues 32 to 54, 75 to 97, 102 to 124, 145 to 167, 182 to 204, 211 to 233, 263 to 285, 298 to 320, 361 to 383, 404 to 423, 428 to 450, 462 to 484, and 494 to 516; these read IQAI…WASK, GMAI…LVYT, GLIY…AERL, IRIL…QMVG, VAVV…LATT, AILL…NFNF, ALSL…MRFF, FYAT…GAIL, AVAF…SAVS, VSKI…GILF, IAFM…ILLS, LVGG…TIWV, and YPYE…LFSI.

It belongs to the sodium:solute symporter (SSF) (TC 2.A.21) family.

The protein localises to the cell inner membrane. In terms of biological role, transports acetate. The polypeptide is Cation/acetate symporter ActP (Photorhabdus laumondii subsp. laumondii (strain DSM 15139 / CIP 105565 / TT01) (Photorhabdus luminescens subsp. laumondii)).